A 338-amino-acid chain; its full sequence is 5-dehydro-2-deoxygluconokinase (338 aa).

Belongs to the carbohydrate kinase PfkB family.

It carries out the reaction 5-dehydro-2-deoxy-D-gluconate + ATP = 6-phospho-5-dehydro-2-deoxy-D-gluconate + ADP + H(+). The protein operates within polyol metabolism; myo-inositol degradation into acetyl-CoA; acetyl-CoA from myo-inositol: step 5/7. Catalyzes the phosphorylation of 5-dehydro-2-deoxy-D-gluconate (2-deoxy-5-keto-D-gluconate or DKG) to 6-phospho-5-dehydro-2-deoxy-D-gluconate (DKGP). The protein is 5-dehydro-2-deoxygluconokinase of Mesomycoplasma hyopneumoniae (strain 232) (Mycoplasma hyopneumoniae).